Consider the following 358-residue polypeptide: C-X-C chemokine receptor type 4-B (358 aa).

The interval Met-1–Phe-25 is important for chemokine binding and signaling. Residues Met-1–Phe-44 lie on the Extracellular side of the membrane. Residues Asn-16 and Asn-20 are each glycosylated (N-linked (GlcNAc...) asparagine). Disulfide bonds link Cys-32–Cys-281 and Cys-113–Cys-190. A helical transmembrane segment spans residues Leu-45–Met-67. The Cytoplasmic segment spans residues Gly-68–Arg-81. The helical transmembrane segment at Leu-82–Ala-103 threads the bilayer. The chemokine binding stretch occupies residues Trp-98 to Asp-101. Topologically, residues Ile-104–Lys-114 are extracellular. The chain crosses the membrane as a helical span at residues Ala-115 to Ile-134. A chemokine binding region spans residues His-117–Thr-121. Over Ser-135–Lys-158 the chain is Cytoplasmic. Residues Tyr-139–Ser-151 form an involved in dimerization; when bound to chemokine region. A helical transmembrane segment spans residues Val-159 to Phe-178. Residues Ala-179 to Trp-202 lie on the Extracellular side of the membrane. Residues Cys-190–Tyr-194 form a chemokine binding, important for signaling region. The chain crosses the membrane as a helical span at residues Thr-203–Leu-223. Topologically, residues Val-224–Thr-248 are cytoplasmic. The chain crosses the membrane as a helical span at residues Val-249–Thr-268. The Extracellular segment spans residues Asp-269–Lys-289. The helical transmembrane segment at Ala-290–Tyr-309 threads the bilayer. Topologically, residues Ala-310 to Ser-358 are cytoplasmic. The segment at Lys-338–Ser-358 is disordered. Positions Ser-344 to Ser-358 are enriched in low complexity.

It belongs to the G-protein coupled receptor 1 family. In terms of assembly, monomer. Can form dimers. Post-translationally, sulfation is required for efficient binding of cxcl12/sdf-1alpha and promotes its dimerization. O- and N-glycosylated.

Its subcellular location is the cell membrane. The protein localises to the cytoplasm. The protein resides in the nucleus. It localises to the early endosome. It is found in the late endosome. Its subcellular location is the lysosome. Its function is as follows. Receptor for the C-X-C chemokine cxcl12/sdf-1. Transduces a signal by increasing the intracellular level of calcium ions. Signaling with cxcl12/sdf-1 mediates the directional movement of mesodermal cells during gastrulation. May play a role in the migration of embryonic presumptive primordial germ cells (pPGCs). May also be involved in regulating migration of hematopoietic stem cells into the larval liver. The chain is C-X-C chemokine receptor type 4-B (cxcr4-b) from Xenopus laevis (African clawed frog).